Reading from the N-terminus, the 341-residue chain is Guanine nucleotide-binding protein subunit beta (341 aa).

WD repeat units lie at residues G54 to D84, L96 to S126, G142 to D171, G183 to D213, G225 to D255, N269 to D299, and G311 to N341.

The protein belongs to the WD repeat G protein beta family. In terms of assembly, g proteins are composed of 3 units, alpha, beta and gamma.

Guanine nucleotide-binding proteins (G proteins) are involved as a modulator or transducer in various transmembrane signaling systems. The beta and gamma chains are required for the GTPase activity, for replacement of GDP by GTP, and for G protein-effector interaction. This chain is Guanine nucleotide-binding protein subunit beta, found in Lymnaea stagnalis (Great pond snail).